Reading from the N-terminus, the 1034-residue chain is Presequence protease, mitochondrial (1034 aa).

Residues 1–29 constitute a mitochondrion transit peptide; the sequence is MLKGGMLSRWKMWSPQYKILRNHLINFKS. His-128 serves as a coordination point for Zn(2+). Glu-131 acts as the Proton acceptor in catalysis. 2 residues coordinate Zn(2+): His-132 and Glu-229.

This sequence belongs to the peptidase M16 family. PreP subfamily. Homodimer. Zn(2+) serves as cofactor.

It is found in the mitochondrion. ATP-independent protease that degrades mitochondrial transit peptides after their cleavage. Also degrades other unstructured peptides. The protein is Presequence protease, mitochondrial of Drosophila melanogaster (Fruit fly).